Reading from the N-terminus, the 406-residue chain is Phosphopentomutase (406 aa).

Positions 10, 305, 310, 346, 347, and 358 each coordinate Mn(2+).

The protein belongs to the phosphopentomutase family. Mn(2+) is required as a cofactor.

It is found in the cytoplasm. It catalyses the reaction 2-deoxy-alpha-D-ribose 1-phosphate = 2-deoxy-D-ribose 5-phosphate. The enzyme catalyses alpha-D-ribose 1-phosphate = D-ribose 5-phosphate. It functions in the pathway carbohydrate degradation; 2-deoxy-D-ribose 1-phosphate degradation; D-glyceraldehyde 3-phosphate and acetaldehyde from 2-deoxy-alpha-D-ribose 1-phosphate: step 1/2. In terms of biological role, isomerase that catalyzes the conversion of deoxy-ribose 1-phosphate (dRib-1-P) and ribose 1-phosphate (Rib-1-P) to deoxy-ribose 5-phosphate (dRib-5-P) and ribose 5-phosphate (Rib-5-P), respectively. This is Phosphopentomutase from Methylorubrum extorquens (strain PA1) (Methylobacterium extorquens).